A 416-amino-acid polypeptide reads, in one-letter code: Kelch repeat-containing protein At1g19460 (416 aa).

Polar residues predominate over residues 1–11 (MANISEISGDS). The interval 1–55 (MANISEISGDSNDGGDPNKKPEEQVLRRSRRIATRNENQNKKPKEEEEKDNRSVS) is disordered. Basic and acidic residues-rich tracts occupy residues 16-26 (DPNKKPEEQVL) and 38-52 (NQNKKPKEEEEKDNR). Kelch repeat units lie at residues 156 to 202 (EMYV…VFDG), 203 to 250 (KIYV…FAHA), 255 to 293 (KLYILGSRCLIYEPKRNGEWDATVNANPIWNLWKVPCTM), and 294 to 344 (QCVI…SDGS).

This chain is Kelch repeat-containing protein At1g19460, found in Arabidopsis thaliana (Mouse-ear cress).